We begin with the raw amino-acid sequence, 220 residues long: Ribosomal RNA large subunit methyltransferase E (220 aa).

S-adenosyl-L-methionine is bound by residues Gly-60, Trp-62, Asp-92, Asp-108, and Asp-133. Lys-173 functions as the Proton acceptor in the catalytic mechanism.

The protein belongs to the class I-like SAM-binding methyltransferase superfamily. RNA methyltransferase RlmE family.

It localises to the cytoplasm. The catalysed reaction is uridine(2552) in 23S rRNA + S-adenosyl-L-methionine = 2'-O-methyluridine(2552) in 23S rRNA + S-adenosyl-L-homocysteine + H(+). Its function is as follows. Specifically methylates the uridine in position 2552 of 23S rRNA at the 2'-O position of the ribose in the fully assembled 50S ribosomal subunit. This Paraburkholderia xenovorans (strain LB400) protein is Ribosomal RNA large subunit methyltransferase E.